Reading from the N-terminus, the 144-residue chain is Superoxide dismutase [Mn], mitochondrial (144 aa).

Mn(2+)-binding residues include His10, His58, and Asp143.

Belongs to the iron/manganese superoxide dismutase family. Homotetramer. It depends on Mn(2+) as a cofactor.

It is found in the mitochondrion matrix. The catalysed reaction is 2 superoxide + 2 H(+) = H2O2 + O2. In terms of biological role, destroys superoxide anion radicals which are normally produced within the cells and which are toxic to biological systems. This Petromyzon marinus (Sea lamprey) protein is Superoxide dismutase [Mn], mitochondrial.